A 160-amino-acid chain; its full sequence is NADH-quinone oxidoreductase subunit I (160 aa).

2 4Fe-4S ferredoxin-type domains span residues 52 to 81 and 91 to 120; these read RRYS…IEAE and TRYD…EGPN. 8 residues coordinate [4Fe-4S] cluster: C61, C64, C67, C71, C100, C103, C106, and C110.

The protein belongs to the complex I 23 kDa subunit family. As to quaternary structure, NDH-1 is composed of 14 different subunits. Subunits NuoA, H, J, K, L, M, N constitute the membrane sector of the complex. Requires [4Fe-4S] cluster as cofactor.

It localises to the cell membrane. It carries out the reaction a quinone + NADH + 5 H(+)(in) = a quinol + NAD(+) + 4 H(+)(out). NDH-1 shuttles electrons from NADH, via FMN and iron-sulfur (Fe-S) centers, to quinones in the respiratory chain. The immediate electron acceptor for the enzyme in this species is believed to be ubiquinone. Couples the redox reaction to proton translocation (for every two electrons transferred, four hydrogen ions are translocated across the cytoplasmic membrane), and thus conserves the redox energy in a proton gradient. The sequence is that of NADH-quinone oxidoreductase subunit I from Wolbachia sp. subsp. Brugia malayi (strain TRS).